Consider the following 236-residue polypeptide: Phosphoribosylaminoimidazole-succinocarboxamide synthase (236 aa).

Belongs to the SAICAR synthetase family.

It catalyses the reaction 5-amino-1-(5-phospho-D-ribosyl)imidazole-4-carboxylate + L-aspartate + ATP = (2S)-2-[5-amino-1-(5-phospho-beta-D-ribosyl)imidazole-4-carboxamido]succinate + ADP + phosphate + 2 H(+). Its pathway is purine metabolism; IMP biosynthesis via de novo pathway; 5-amino-1-(5-phospho-D-ribosyl)imidazole-4-carboxamide from 5-amino-1-(5-phospho-D-ribosyl)imidazole-4-carboxylate: step 1/2. The chain is Phosphoribosylaminoimidazole-succinocarboxamide synthase from Rickettsia felis (strain ATCC VR-1525 / URRWXCal2) (Rickettsia azadi).